Reading from the N-terminus, the 267-residue chain is Short chain dehydrogenase claC (267 aa).

Residues I27, D73, N100, and R133 each coordinate NADP(+). Catalysis depends on proton donor residues S149 and S150. NADP(+) is bound by residues Y164, K168, and T199. The active-site Proton acceptor is the Y164. K168 acts as the Lowers pKa of active site Tyr in catalysis.

It belongs to the short-chain dehydrogenases/reductases (SDR) family.

It participates in pigment biosynthesis. Functionally, non-reducing polyketide synthase; part of the gene cluster that mediates the biosynthesis of the bianthraquinone cladofulvin, a conidial pigment not required for virulence but that plays a role in fitness and resistance to environmental stresses including UV light and low-temperature stress. The pathway begins with the synthesis of atrochrysone thioester by the polyketide synthase (PKS) claG. The atrochrysone carboxyl ACP thioesterase claF then breaks the thioester bond and releases the atrochrysone carboxylic acid from claG. This compound is decarboxylated by claH to yield emodin, which is further converted to chrysophanol hydroquinone by the reductase claC and the dehydratase claB. The cytochrome monooxygenase P450 claM then catalyzes the dimerization of nataloe-emodin to cladofulvin. This is Short chain dehydrogenase claC from Passalora fulva (Tomato leaf mold).